Consider the following 69-residue polypeptide: Large ribosomal subunit protein bL28 (69 aa).

The protein belongs to the bacterial ribosomal protein bL28 family.

This Oleidesulfovibrio alaskensis (strain ATCC BAA-1058 / DSM 17464 / G20) (Desulfovibrio alaskensis) protein is Large ribosomal subunit protein bL28.